We begin with the raw amino-acid sequence, 333 residues long: MIFDQKGIRKRSITVAYFYNTISQKCCDLKLRRVNNVDEQKRRIYERDLHRPGLALAGFTNLFTYKRVQIFGNTETRFLNHLDDEKERNRLFENFVRFKIPCIILTSNNKLPESLIEMATRAEIPVYSTRCSSTKAIYNITDFLDDQFSIYQQYHGSMVDVYGVGVLLVGKSGLGKSEVALDLIERGHGLVADDAVVIRRKGESTTLMARRNNIIDHFMEIRGLGVVDMKANFGIRAIREQKEVQVVAELMHWDSDTEYERLGLDAKSTKILGVELPLVQLPILPGKNITVIIEVVALNFLLKRYSNYVAAEALHSRISQVINSERTNFDGDE.

Catalysis depends on residues His155 and Lys176. Residue 170-177 participates in ATP binding; that stretch reads GKSGLGKS. A Mg(2+)-binding site is contributed by Ser177. The Proton acceptor; for phosphorylation activity. Proton donor; for dephosphorylation activity role is filled by Asp194. Residues 219-228 form an important for the catalytic mechanism of both phosphorylation and dephosphorylation region; that stretch reads MEIRGLGVVD. Glu220 serves as a coordination point for Mg(2+). Arg261 is a catalytic residue. Residues 282–287 are important for the catalytic mechanism of dephosphorylation; the sequence is PILPGK.

This sequence belongs to the HPrK/P family. In terms of assembly, homohexamer. The cofactor is Mg(2+).

It catalyses the reaction [HPr protein]-L-serine + ATP = [HPr protein]-O-phospho-L-serine + ADP + H(+). The catalysed reaction is [HPr protein]-O-phospho-L-serine + phosphate + H(+) = [HPr protein]-L-serine + diphosphate. Its function is as follows. Catalyzes the ATP- as well as the pyrophosphate-dependent phosphorylation of a specific serine residue in HPr, a phosphocarrier protein of the phosphoenolpyruvate-dependent sugar phosphotransferase system (PTS). HprK/P also catalyzes the pyrophosphate-producing, inorganic phosphate-dependent dephosphorylation (phosphorolysis) of seryl-phosphorylated HPr (P-Ser-HPr). In Chlorobium chlorochromatii (strain CaD3), this protein is HPr kinase/phosphorylase.